We begin with the raw amino-acid sequence, 218 residues long: Octanoyltransferase (218 aa).

The region spanning 32–214 (VLTADEIWLV…HFTQLLGYND (183 aa)) is the BPL/LPL catalytic domain. Residues 71–78 (RGGQITYH), 143–145 (SLG), and 156–158 (GLA) contribute to the substrate site. The active-site Acyl-thioester intermediate is Cys-174.

It belongs to the LipB family.

It localises to the cytoplasm. The catalysed reaction is octanoyl-[ACP] + L-lysyl-[protein] = N(6)-octanoyl-L-lysyl-[protein] + holo-[ACP] + H(+). Its pathway is protein modification; protein lipoylation via endogenous pathway; protein N(6)-(lipoyl)lysine from octanoyl-[acyl-carrier-protein]: step 1/2. Functionally, catalyzes the transfer of endogenously produced octanoic acid from octanoyl-acyl-carrier-protein onto the lipoyl domains of lipoate-dependent enzymes. Lipoyl-ACP can also act as a substrate although octanoyl-ACP is likely to be the physiological substrate. This is Octanoyltransferase from Histophilus somni (strain 2336) (Haemophilus somnus).